The chain runs to 379 residues: MKILRKNHPLLKIVNHSFIDLPTPSNISSWWNFGSLLGMCLMIQILTGLFLAMHYTSDTTTAFSSVAHICRDVNYGWLIRYLHANGASMFFICLFIHVGRGIYYGSYTLSETWNIGIILFLTTMATAFVGYVLPWGQMSFWGATVITNLLSAIPYIGNTLVEWIWGGFSVDKATLTRFFAFHFILPFIITAFALVHLLFLHETGSNNPSGLNSDSDKIPFHPYYTTKDLLGIFLLLLVLMILALFFPDILGDPDNFTPANPLNTPAHIKPEWYFLFAYAILRSIPNKLGGVLALVLSILILAAFPLLNTSKQHGLIFRPITQVIYWIFIXNLLVLTWIGGQPVEYPXTMIGQIASITYFAIIIILIPVSNTIENNIIKL.

4 helical membrane-spanning segments follow: residues 33-53 (FGSL…FLAM), 77-98 (WLIR…FIHV), 113-133 (WNIG…GYVL), and 178-198 (FFAF…VHLL). H83 and H97 together coordinate heme b. 2 residues coordinate heme b: H182 and H196. H201 contributes to the a ubiquinone binding site. The next 4 helical transmembrane spans lie at 226 to 246 (TKDL…ALFF), 288 to 308 (LGGV…PLLN), 320 to 340 (ITQV…WIGG), and 347 to 367 (XTMI…ILIP).

The protein belongs to the cytochrome b family. In terms of assembly, the cytochrome bc1 complex contains 11 subunits: 3 respiratory subunits (MT-CYB, CYC1 and UQCRFS1), 2 core proteins (UQCRC1 and UQCRC2) and 6 low-molecular weight proteins (UQCRH/QCR6, UQCRB/QCR7, UQCRQ/QCR8, UQCR10/QCR9, UQCR11/QCR10 and a cleavage product of UQCRFS1). This cytochrome bc1 complex then forms a dimer. It depends on heme b as a cofactor.

It localises to the mitochondrion inner membrane. Component of the ubiquinol-cytochrome c reductase complex (complex III or cytochrome b-c1 complex) that is part of the mitochondrial respiratory chain. The b-c1 complex mediates electron transfer from ubiquinol to cytochrome c. Contributes to the generation of a proton gradient across the mitochondrial membrane that is then used for ATP synthesis. This is Cytochrome b (MT-CYB) from Akodon boliviensis (Bolivian grass mouse).